Reading from the N-terminus, the 83-residue chain is Small ribosomal subunit protein uS17 (83 aa).

The protein belongs to the universal ribosomal protein uS17 family. As to quaternary structure, part of the 30S ribosomal subunit.

In terms of biological role, one of the primary rRNA binding proteins, it binds specifically to the 5'-end of 16S ribosomal RNA. The polypeptide is Small ribosomal subunit protein uS17 (Francisella tularensis subsp. tularensis (strain FSC 198)).